Reading from the N-terminus, the 951-residue chain is Serine/threonine-protein kinase ATG1 (951 aa).

The region spanning 22–327 (FTINEEIGKG…FPEYFAHPVV (306 aa)) is the Protein kinase domain. ATP contacts are provided by residues 28–36 (IGKGSFATV) and lysine 51. Aspartate 165 functions as the Proton acceptor in the catalytic mechanism. Disordered regions lie at residues 343–375 (IITP…PVET), 387–458 (EQAP…YDEQ), 514–573 (HIPK…SSPS), and 924–951 (HQSM…TPPH). 2 stretches are compositionally biased toward basic and acidic residues: residues 359-368 (SLRERQRENP) and 432-442 (PRQRDRTERHY). 2 stretches are compositionally biased toward polar residues: residues 547–573 (AQGN…SSPS) and 939–951 (GGTT…TPPH).

Belongs to the protein kinase superfamily. Ser/Thr protein kinase family. APG1/unc-51/ULK1 subfamily. As to quaternary structure, homodimer. Forms a ternary complex with ATG13 and ATG17.

It is found in the cytoplasm. Its subcellular location is the preautophagosomal structure membrane. It catalyses the reaction L-seryl-[protein] + ATP = O-phospho-L-seryl-[protein] + ADP + H(+). It carries out the reaction L-threonyl-[protein] + ATP = O-phospho-L-threonyl-[protein] + ADP + H(+). Serine/threonine protein kinase involved in the cytoplasm to vacuole transport (Cvt) and found to be essential in autophagy, where it is required for the formation of autophagosomes. Involved in the clearance of protein aggregates which cannot be efficiently cleared by the proteasome. Required for selective autophagic degradation of the nucleus (nucleophagy) as well as for mitophagy which contributes to regulate mitochondrial quantity and quality by eliminating the mitochondria to a basal level to fulfill cellular energy requirements and preventing excess ROS production. Also involved in endoplasmic reticulum-specific autophagic process, in selective removal of ER-associated degradation (ERAD) substrates. Plays a key role in ATG9 and ATG23 cycling through the pre-autophagosomal structure and is necessary to promote ATG18 binding to ATG9 through phosphorylation of ATG9. Catalyzes phosphorylation of ATG4, decreasing the interaction between ATG4 and ATG8 and impairing deconjugation of PE-conjugated forms of ATG8. This is Serine/threonine-protein kinase ATG1 from Sclerotinia sclerotiorum (strain ATCC 18683 / 1980 / Ss-1) (White mold).